Reading from the N-terminus, the 51-residue chain is Ovomucoid (51 aa).

The Kazal-like domain maps to 3–51 (VDCSGYPKPACTLEYFPLCGSDNQTYANKCTFCNAVVEKNVTLNHLGEC). Cystine bridges form between cysteine 5/cysteine 35, cysteine 13/cysteine 32, and cysteine 21/cysteine 51. Asparagine 42 carries an N-linked (GlcNAc...) asparagine glycan.

It localises to the secreted. The polypeptide is Ovomucoid (Nothoprocta perdicaria (Chilean tinamou)).